The primary structure comprises 1134 residues: Ankyrin repeat and SAM domain-containing protein 1A (1134 aa).

N-acetylglycine is present on Gly-2. Residues 33–55 (GGGGGGGSGGGGGGSGGGGGGLG) are compositionally biased toward gly residues. The tract at residues 33 to 57 (GGGGGGGSGGGGGGSGGGGGGLGSS) is disordered. 6 ANK repeats span residues 79–108 (TGYT…LTNV), 112–141 (KGCY…SHTR), 148–177 (DNET…DPTM), 181–210 (KFET…NLLS), 214–243 (KKHT…DSNY), and 246–275 (EMGS…DVNI). The span at 305 to 317 (HMTGKRSTKEVDK) shows a compositional bias: basic and acidic residues. Disordered stretches follow at residues 305 to 338 (HMTG…KSQG), 375 to 422 (SMAS…EEDH), and 469 to 498 (VDGK…VPEQ). Position 318 is a phosphothreonine (Thr-318). The span at 328–337 (SMDSISQKSQ) shows a compositional bias: polar residues. Residues 382–392 (SDQDSTNKEAE) are compositionally biased toward basic and acidic residues. Ser-507 carries the post-translational modification Phosphoserine. The tract at residues 569 to 650 (LTGLPTTNSR…MGSRSESLSN (82 aa)) is disordered. The segment covering 572 to 588 (LPTTNSRSHPETLTHTA) has biased composition (polar residues). The span at 613-628 (PKAELKLSRSLSKSDS) shows a compositional bias: basic and acidic residues. Residues Ser-620, Ser-622, Ser-624, Ser-626, Ser-628, Ser-647, Ser-661, Ser-663, Ser-666, and Ser-677 each carry the phosphoserine modification. The span at 633–650 (CSPTEDATMGSRSESLSN) shows a compositional bias: polar residues. 2 consecutive SAM domains span residues 696-762 (TLEQ…LPKV) and 770-837 (NSPP…YEEP). Residues 856–868 (TSSPLSQNDSCTG) show a composition bias toward polar residues. 2 disordered regions span residues 856 to 896 (TSSP…APSR) and 1079 to 1134 (AEMI…LSTN). Ser-887 is subject to Phosphoserine. The PID domain occupies 936–1091 (IFESCGYEAN…IETKSSKPVP (156 aa)). The span at 1123 to 1134 (PKPDSKRSLSTN) shows a compositional bias: basic and acidic residues.

As to quaternary structure, interacts (via SAM domain) with EPHA2 (via SAM domain). Interacts with EPHA8; EPHA8 kinase activity-independent but stimulated by EPHA8 ubiquitination. Interacts (via SAM domain) with EPHA6 (via SAM domain). Post-translationally, phosphorylated on tyrosine residues in response to EGF and PDGF. As to expression, widely expressed (at protein level).

It is found in the cytoplasm. The protein localises to the cell projection. Functionally, regulator of different signaling pathways. Regulates EPHA8 receptor tyrosine kinase signaling to control cell migration and neurite retraction. In Homo sapiens (Human), this protein is Ankyrin repeat and SAM domain-containing protein 1A (ANKS1A).